The sequence spans 42 residues: Cytochrome b559 subunit beta (42 aa).

Residues Trp17 to Ala33 form a helical membrane-spanning segment. His21 lines the heme pocket.

It belongs to the PsbE/PsbF family. As to quaternary structure, heterodimer of an alpha subunit and a beta subunit. PSII is composed of 1 copy each of membrane proteins PsbA, PsbB, PsbC, PsbD, PsbE, PsbF, PsbH, PsbI, PsbJ, PsbK, PsbL, PsbM, PsbT, PsbX, PsbY, PsbZ, Psb30/Ycf12, at least 3 peripheral proteins of the oxygen-evolving complex and a large number of cofactors. It forms dimeric complexes. Heme b is required as a cofactor.

Its subcellular location is the plastid. The protein resides in the chloroplast thylakoid membrane. This b-type cytochrome is tightly associated with the reaction center of photosystem II (PSII). PSII is a light-driven water:plastoquinone oxidoreductase that uses light energy to abstract electrons from H(2)O, generating O(2) and a proton gradient subsequently used for ATP formation. It consists of a core antenna complex that captures photons, and an electron transfer chain that converts photonic excitation into a charge separation. In Emiliania huxleyi (Coccolithophore), this protein is Cytochrome b559 subunit beta.